A 124-amino-acid chain; its full sequence is MPTINQLICKGRSGLTRKKKVPALGKCNPQRRGVCTKVYTTTPRKPNSALRKVARVKISGYGEVTAYIPGEGHNLQEHSVVLIRGGRVKDLPGVRYHIIRGALDLRGVQNRKKARSKYGVKKSG.

A 3-methylthioaspartic acid modification is found at D90.

Belongs to the universal ribosomal protein uS12 family. Part of the 30S ribosomal subunit. Contacts proteins S8 and S17. May interact with IF1 in the 30S initiation complex.

With S4 and S5 plays an important role in translational accuracy. Functionally, interacts with and stabilizes bases of the 16S rRNA that are involved in tRNA selection in the A site and with the mRNA backbone. Located at the interface of the 30S and 50S subunits, it traverses the body of the 30S subunit contacting proteins on the other side and probably holding the rRNA structure together. The combined cluster of proteins S8, S12 and S17 appears to hold together the shoulder and platform of the 30S subunit. The protein is Small ribosomal subunit protein uS12 of Wolbachia pipientis subsp. Culex pipiens (strain wPip).